A 204-amino-acid polypeptide reads, in one-letter code: Small ribosomal subunit protein uS4 (204 aa).

The 64-residue stretch at 93-156 folds into the S4 RNA-binding domain; sequence SRLSSVLYHS…AKIPVVVEAE (64 aa).

The protein belongs to the universal ribosomal protein uS4 family. In terms of assembly, part of the 30S ribosomal subunit. Contacts protein S5. The interaction surface between S4 and S5 is involved in control of translational fidelity.

In terms of biological role, one of the primary rRNA binding proteins, it binds directly to 16S rRNA where it nucleates assembly of the body of the 30S subunit. Its function is as follows. With S5 and S12 plays an important role in translational accuracy. The polypeptide is Small ribosomal subunit protein uS4 (Wolbachia pipientis wMel).